Reading from the N-terminus, the 940-residue chain is Antiviral innate immune response receptor RIG-I (940 aa).

2 consecutive CARD domains span residues 1 to 87 (MTAE…GLCE) and 92 to 172 (WDFQ…KTLK). Residues Lys48, Lys96, Lys154, Lys164, Lys172, and Lys190 each participate in a glycyl lysine isopeptide (Lys-Gly) (interchain with G-Cter in ubiquitin) cross-link. Positions 219 to 928 (ENQNLSQNSC…LSFDAAEMAG (710 aa)) are interaction with ZC3HAV1. A Helicase ATP-binding domain is found at 249 to 428 (ALPAQNGKNT…AEATEYICKL (180 aa)). 262 to 269 (APTGCGKT) contributes to the ATP binding site. A DECH box motif is present at residues 370–373 (DECH). One can recognise a Helicase C-terminal domain in the interval 613 to 779 (KLRDLCFILQ…ILQTWDEAVF (167 aa)). The mediates interaction with RNF135 stretch occupies residues 738–928 (GSKCFLLTAN…LSFDAAEMAG (191 aa)). Thr773 is modified (phosphothreonine; by CK2). One can recognise an RLR CTR domain in the interval 795–928 (DNQGKPEPVP…LSFDAAEMAG (134 aa)). A Zn(2+)-binding site is contributed by Cys813. Lys815 participates in a covalent cross-link: Glycyl lysine isopeptide (Lys-Gly) (interchain with G-Cter in ubiquitin). A Zn(2+)-binding site is contributed by Cys816. Lys861 is modified (N6-acetyllysine). Zn(2+) is bound by residues Cys867 and Cys872. Lys912 is modified (N6-acetyllysine).

This sequence belongs to the helicase family. RLR subfamily. In terms of assembly, monomer; maintained as a monomer in an autoinhibited state. Upon binding of viral RNAs and conformational shift, homooligomerizes and forms filaments on these molecules. Interacts (via tandem CARD domain) with MAVS/IPS1 promoting its filamentation. Interacts with DHX58/LGP2, IKBKE, TBK1 and STING1. Interacts (via CARD domain) with TRIM25 (via SPRY domain). Interacts (double-stranded RNA-bound oligomeric form) with RNF135 (homodimer); involved in RNA length-dependent activation of the RIG-I signaling pathway. Interacts with CYLD. Interacts with NLRC5; blocks the interaction of MAVS/IPS1 to RIGI. Interacts with SRC. Interacts with DDX60. Interacts with ZC3HAV1 (via zinc-fingers) in an RNA-dependent manner. Interacts (via tandem CARD domain) with SEC14L1; the interaction is direct and impairs the interaction of RIGI with MAVS/IPS1. Interacts with VCP/p97; interaction is direct and allows the recruitment of RNF125 and subsequent ubiquitination and degradation. Interacts with NOP53; may regulate RIGI through USP15-mediated 'Lys-63'-linked deubiquitination. Interacts with SIGLEC10, CBL and PTPN11; within a negative feedback loop leading to RIGI degradation. Interacts with LRRC25. Interacts with ZCCHC3; leading to activation of RIGI. Interacts with RNF123. Interacts with UBE2D3 and UBE2N; E2 ubiquitin ligases involved in RNF135-mediated ubiquitination of RIGI and activation of the RIG-I signaling pathway. Interacts with IFIT3. Interacts with DDX3X. Interacts with RTN3. Interacts with ARL16; this interaction is GTP-dependent and induced upon viral infection; this interaction suppresses the RNA sensing activity of RIGI. Interacts with DHX16; this interaction enhances RIGI-mediated antiviral response. Interacts with IRGM; promoting RIGI degradation. Interacts with IFI6; this interaction inhibits RIGI activation. Interacts with ECSIT; this interaction bridges RIGI to the MAVS complex at the mitochondrion. Interacts with YWHAE; this interaction drives RIGI at the mitochondrion. Post-translationally, phosphorylated in resting cells and dephosphorylated in RNA virus-infected cells. Phosphorylation at Thr-773 results in inhibition of its activity while dephosphorylation at these sites results in its activation. ISGylated. Conjugated to ubiquitin-like protein ISG15 upon IFN-beta stimulation. ISGylation negatively regulates its function in antiviral signaling response. In terms of processing, sumoylated, probably by MUL1; inhibiting its polyubiquitination. Post-translationally, acetylated in response to RNA virus infection. Deacetylated by HDAC6 in the presence of viral mRNAs which is required for detection of viral RNA by RIGI. Ubiquitinated. 'Lys-63' ubiquitination by RNF135, which occurs after RNA-binding and homodimerization, releases the autoinhibition of the CARD domains by the RLR CTR domain, an essential step in the activation of the RIG-I signaling pathway. Also ubiquitinated by TRIM4. Also undergoes 'Lys-48' ubiquitination by RNF125 that leads to proteasomal degradation. 'Lys-48' ubiquitination follows viral infection and is enhanced by 'Lys-63'-linked ubiquitination of the CARD domains that promotes interaction with VCP/p97 and subsequent recruitment of RNF125. Within a negative feedback loop involving SIGLEC10 and PTPN11, 'Lys-48' ubiquitination at Lys-815 by CBL also elicits the proteasomal degradation of RIGI. Deubiquitinated by CYLD, a protease that selectively cleaves 'Lys-63'-linked ubiquitin chains. Also probably deubiquitinated by USP17L2/USP17 that cleaves 'Lys-48'- and 'Lys-63'-linked ubiquitin chains and positively regulates the receptor. Ubiquitinated by TRIM40 via 'Lys-48'-linked ubiquitination; leading to proteasomal degradation. Deubiquitinated by USP27X that cleaves 'Lys-63'-linked ubiquitin chains and inhibits the innate immune receptor activity. Deubiquitinated by USP3 that also cleaves 'Lys-63'-linked ubiquitin chains and inhibits the innate immune receptor activity. In terms of processing, degraded via selective autophagy following interaction with IRGM. IRGM promotes RIGI recruitment to autophagosome membranes, promoting its SQSTM1/p62-dependent autophagic degradation. Ubiquitously expressed, with highest levels in spleen, liver, intestine and heart. Up-regulated in tracheobronchial lymph node and tonsils during porcine reproductive and respiratory syndrome virus (PRRSV) infection.

The protein localises to the cytoplasm. Its subcellular location is the cell projection. The protein resides in the ruffle membrane. It is found in the cytoskeleton. It localises to the cell junction. The protein localises to the tight junction. It catalyses the reaction ATP + H2O = ADP + phosphate + H(+). Innate immune receptor that senses cytoplasmic viral nucleic acids and activates a downstream signaling cascade leading to the production of type I interferons and pro-inflammatory cytokines. Forms a ribonucleoprotein complex with viral RNAs on which it homooligomerizes to form filaments. The homooligomerization allows the recruitment of RNF135 an E3 ubiquitin-protein ligase that activates and amplifies the RIG-I-mediated antiviral signaling in an RNA length-dependent manner through ubiquitination-dependent and -independent mechanisms. Upon activation, associates with mitochondria antiviral signaling protein (MAVS/IPS1) that activates the IKK-related kinases TBK1 and IKBKE which in turn phosphorylate the interferon regulatory factors IRF3 and IRF7, activating transcription of antiviral immunological genes including the IFN-alpha and IFN-beta interferons. Ligands include: 5'-triphosphorylated ssRNA and dsRNA and short dsRNA (&lt;1 kb in length). In addition to the 5'-triphosphate moiety, blunt-end base pairing at the 5'-end of the RNA is very essential. Overhangs at the non-triphosphorylated end of the dsRNA RNA have no major impact on its activity. A 3'overhang at the 5'triphosphate end decreases and any 5'overhang at the 5' triphosphate end abolishes its activity. Detects both positive and negative strand RNA viruses including members of the families Paramyxoviridae, Rhabdoviridae: vesicular stomatitis virus (VSV) Orthomyxoviridae: influenza A and B virus, Flaviviridae: Japanese encephalitis virus (JEV). It also detects rotavirus and reovirus. Also involved in antiviral signaling in response to viruses containing a dsDNA genome. Detects dsRNA produced from non-self dsDNA by RNA polymerase III. May play important roles in granulocyte production and differentiation, bacterial phagocytosis and in the regulation of cell migration. This chain is Antiviral innate immune response receptor RIG-I, found in Sus scrofa (Pig).